Here is a 39-residue protein sequence, read N- to C-terminus: ENFFKEIERAGQRIRDAIISAAPAVETLAQAQKIIKGGD.

As to expression, hemolymph.

The protein localises to the secreted. In terms of biological role, cecropins have lytic and antibacterial activity against several Gram-positive and Gram-negative bacteria. Has antibacterial activity against the Gram-positive bacteria M.luteus (MIC=34.4 uM), L.monocytogenes (MIC=34.4 uM), and S.lutea (MIC=34.4 uM), and the Gram-negative bacterium E.coli D31 (MIC=8.6 uM). Lacks antibacterial activity against the Gram-positive bacterium B.circulans, and the Gram-negative bacteria E.coli ATCC 25922 and S.typhimurium. Has antifungal activity against A.niger, but lacks antifungal activity against C.albicans, C.wickerhamii, F.oxysporum, P.pastoris, P.tannophilus, S.cerevisiae, T.harzianum, and Z.marxianus. The protein is Cecropin-D-like peptide of Galleria mellonella (Greater wax moth).